The following is a 294-amino-acid chain: MDASQKAGLIKKLREITNSGFLDCKKALEETNYDLDKAIEWLQENGKAKAAKKSGRIAAEGLVRASVKGKSAVIFELNSETDFVARNKEFLDLMDNISEALVENSFQSMESAENIFMENDLTILEATTKATATIGEKISFRRAKKFDLLEDQTIGAYTHANGRIASLFLVRGKNEEVAKNVAMHIAAMNPEYMSANEVPQEKIEKLKAEFLKSPALAGKPEKIQQSILSGMLNKALAEFVLLNQPFVMESSLSVEQYLKNNKSEALEMIRYEVGEGIEKKAVDFASEVAAQMKK.

The segment at 81–84 (TDFV) is involved in Mg(2+) ion dislocation from EF-Tu.

It belongs to the EF-Ts family.

It is found in the cytoplasm. Its function is as follows. Associates with the EF-Tu.GDP complex and induces the exchange of GDP to GTP. It remains bound to the aminoacyl-tRNA.EF-Tu.GTP complex up to the GTP hydrolysis stage on the ribosome. The chain is Elongation factor Ts (tsf) from Mycoplasmopsis pulmonis (strain UAB CTIP) (Mycoplasma pulmonis).